The primary structure comprises 266 residues: Glutamate racemase (266 aa).

Substrate is bound by residues 9 to 10 (DS) and 41 to 42 (YG). Cysteine 73 acts as the Proton donor/acceptor in catalysis. A substrate-binding site is contributed by 74-75 (NT). Cysteine 183 functions as the Proton donor/acceptor in the catalytic mechanism. Residue 184-185 (TH) participates in substrate binding.

The protein belongs to the aspartate/glutamate racemases family.

The catalysed reaction is L-glutamate = D-glutamate. The protein operates within cell wall biogenesis; peptidoglycan biosynthesis. Its function is as follows. Provides the (R)-glutamate required for cell wall biosynthesis. The protein is Glutamate racemase of Shewanella woodyi (strain ATCC 51908 / MS32).